The sequence spans 64 residues: NSVHPCCDPVICEPREGEHCISGPCCENCYFLNSGTICKRARGDGNQDYCTGITPDCPRNRYNV.

The Disintegrin domain maps to 1–64 (NSVHPCCDPV…PDCPRNRYNV (64 aa)). 4 disulfides stabilise this stretch: Cys6–Cys29, Cys20–Cys26, Cys25–Cys50, and Cys38–Cys57. The Cell attachment site signature appears at 42–44 (RGD).

This sequence belongs to the disintegrin family. Dimeric disintegrin subfamily. In terms of assembly, homodimer; disulfide-linked. In terms of tissue distribution, expressed by the venom gland.

Its subcellular location is the secreted. May bind to both alpha-IIb/beta-3 (ITGA2B/ITGB3) and alpha-V/beta-3 (ITGAV/ITGB3) integrins, and may inhibit platelet aggregation. The protein is Disintegrin schistatin of Echis carinatus (Saw-scaled viper).